The sequence spans 96 residues: Large ribosomal subunit protein bL28 (96 aa).

This sequence belongs to the bacterial ribosomal protein bL28 family.

This Orientia tsutsugamushi (strain Boryong) (Rickettsia tsutsugamushi) protein is Large ribosomal subunit protein bL28.